A 67-amino-acid chain; its full sequence is MRKTIKVTLIRSRIGRLPKHKATLDGLGLRRINRHVELNNTPAIRGMLNLVSYMIKVELLEEGNQCV.

Belongs to the universal ribosomal protein uL30 family. Part of the 50S ribosomal subunit.

The sequence is that of Large ribosomal subunit protein uL30 from Hamiltonella defensa subsp. Acyrthosiphon pisum (strain 5AT).